Reading from the N-terminus, the 314-residue chain is Homoserine O-acetyltransferase (314 aa).

Cysteine 142 (acyl-thioester intermediate) is an active-site residue. 2 residues coordinate substrate: lysine 163 and serine 192. Catalysis depends on histidine 235, which acts as the Proton acceptor. Residue glutamate 237 is part of the active site. Arginine 249 provides a ligand contact to substrate.

This sequence belongs to the MetA family.

The protein localises to the cytoplasm. It catalyses the reaction L-homoserine + acetyl-CoA = O-acetyl-L-homoserine + CoA. It functions in the pathway amino-acid biosynthesis; L-methionine biosynthesis via de novo pathway; O-acetyl-L-homoserine from L-homoserine: step 1/1. Its function is as follows. Transfers an acetyl group from acetyl-CoA to L-homoserine, forming acetyl-L-homoserine. In Streptococcus pneumoniae (strain JJA), this protein is Homoserine O-acetyltransferase.